The primary structure comprises 530 residues: C2H2-type transcription factor MSN2 (530 aa).

C2H2-type zinc fingers lie at residues 409 to 432 (FVCD…RSLH) and 438 to 460 (FECN…ARTH).

Its subcellular location is the nucleus. It is found in the cytoplasm. Its function is as follows. Transcription factor that acts as a key downstream transcription factor in the HOG1-MAPK pathway. Plays crucial roles in the regulation of conidiation, virulence and multi-stress responses. In addition to regulating the expression of genes specifically involved in stress-response, conidiation and virulence, controls also expression of cellular signaling factors. The sequence is that of C2H2-type transcription factor MSN2 from Metarhizium robertsii (strain ARSEF 23 / ATCC MYA-3075) (Metarhizium anisopliae (strain ARSEF 23)).